We begin with the raw amino-acid sequence, 980 residues long: Thrombospondin-4 (980 aa).

A signal peptide spans 1-42 (MTMITPSSKLTLTKGNKSWSSTRCGAFLLLHLVLQPWQRAGA). Residues 43-210 (QATPQVFDLL…LEELKLVVRG (168 aa)) form the Laminin G-like domain. An EGF-like 1 domain is found at 304 to 343 (PTRRCDSSPCFRGVRCTDTRDGFQCGPCPDGYTGNGITCS). 21 disulfide bridges follow: C308-C319, C313-C328, C331-C342, C348-C359, C353-C368, C371-C395, C401-C412, C406-C421, C424-C436, C442-C456, C450-C466, C468-C480, C496-C501, C506-C526, C542-C562, C565-C585, C601-C621, C624-C644, C662-C682, C702-C722, and C738-C959. Residues 344–381 (DVDECKYHPCYPGVRCTNLAPGFRCDACPVGFTGPMVQ) form the EGF-like 2; calcium-binding domain. One can recognise an EGF-like 3; calcium-binding domain in the interval 397–434 (DVDECRNGACVLNSICINTLGSYRCGPCKPGYTGDQTR). Residues 438-481 (TERSCRNPEQNPCSVHAQCIEERQGDVTCVCGVGWAGRAGYVCG) enclose the EGF-like 4 domain. TSP type-3 repeat units lie at residues 482 to 514 (KDVD…NSGQ), 515 to 550 (EDAD…NVDQ), 551 to 573 (RNTD…NNDQ), 574 to 609 (KDTD…NRDQ), 610 to 632 (QDRD…NPNQ), 633 to 670 (SDVD…NSAQ), 671 to 710 (LDTD…NPAQ), and 711 to 746 (EDSN…EITL). The tract at residues 596-691 (NILDNCPRVP…CDDDDDNDGM (96 aa)) is disordered. Residues 605 to 615 (PNRDQQDRDGD) are compositionally biased toward basic and acidic residues. Residue N631 is glycosylated (N-linked (GlcNAc...) asparagine). Over residues 659–671 (TDNCPTVINSAQL) the composition is skewed to polar residues. A compositionally biased stretch (acidic residues) spans 679–690 (GDECDDDDDNDG). A TSP C-terminal domain is found at 750 to 964 (RAYQTVVLDP…LKYRCNDTIP (215 aa)). A glycan (N-linked (GlcNAc...) asparagine) is linked at N960.

Belongs to the thrombospondin family. As to quaternary structure, homopentamer; disulfide-linked. Interacts with PTBP3. Interacts (via EGF-like 3; calcium-binding domain) with ATF6 and facilitates its processing, activation and nuclear translocation. Interacts with NOTCH1. In terms of tissue distribution, mainly expressed in astrocytes, and in ressponse to peripheral nerve injury, significantly up-regulated in the dorsal spinal cord (at protein level).

The protein localises to the endoplasmic reticulum. It is found in the sarcoplasmic reticulum. The protein resides in the secreted. Its subcellular location is the extracellular space. It localises to the extracellular matrix. Adhesive glycoprotein that mediates cell-to-cell and cell-to-matrix interactions and is involved in various processes including cellular proliferation, migration, adhesion and attachment, inflammatory response to CNS injury, regulation of vascular inflammation and adaptive responses of the heart to pressure overload and in myocardial function and remodeling. Binds to structural extracellular matrix (ECM) proteins and modulates the ECM in response to tissue damage, contributing to cardioprotective and adaptive ECM remodeling. Plays a role in ER stress response, via its interaction with the activating transcription factor 6 alpha (ATF6) which produces adaptive ER stress response factors and protects myocardium from pressure overload. May contribute to spinal presynaptic hypersensitivity and neuropathic pain states after peripheral nerve injury. May play a role in regulating protective astrogenesis from the subventricular zone (SVZ) niche after injury in a NOTCH1-dependent manner. This is Thrombospondin-4 (Thbs4) from Rattus norvegicus (Rat).